We begin with the raw amino-acid sequence, 337 residues long: Probable sulfurtransferase (337 aa).

Glycine 83 lines the ATP pocket. Cysteine 172 and cysteine 175 together coordinate [4Fe-4S] cluster. ATP is bound by residues lysine 179 and glycine 206. Position 284 (cysteine 284) interacts with [4Fe-4S] cluster.

This sequence belongs to the TtcA family. [4Fe-4S] cluster serves as cofactor. It depends on Mg(2+) as a cofactor.

This chain is Probable sulfurtransferase, found in Methanocaldococcus jannaschii (strain ATCC 43067 / DSM 2661 / JAL-1 / JCM 10045 / NBRC 100440) (Methanococcus jannaschii).